Here is a 40-residue protein sequence, read N- to C-terminus: Dolichyl-diphosphooligosaccharide--protein glycosyltransferase subunit 4 (40 aa).

Over 1-4 (MITD) the chain is Lumenal. The chain crosses the membrane as a helical span at residues 5 to 25 (VQLAIFSNVLGVFLFLLVVAY). Residues 26–40 (HYINANTGKSSIKTK) lie on the Cytoplasmic side of the membrane.

This sequence belongs to the OST4 family. As to quaternary structure, component of the oligosaccharyltransferase (OST) complex.

Its subcellular location is the endoplasmic reticulum membrane. Its function is as follows. Subunit of the oligosaccharyl transferase (OST) complex that catalyzes the initial transfer of a defined glycan (Glc(3)Man(9)GlcNAc(2) in eukaryotes) from the lipid carrier dolichol-pyrophosphate to an asparagine residue within an Asn-X-Ser/Thr consensus motif in nascent polypeptide chains, the first step in protein N-glycosylation. N-glycosylation occurs cotranslationally and the complex associates with the Sec61 complex at the channel-forming translocon complex that mediates protein translocation across the endoplasmic reticulum (ER). All subunits are required for a maximal enzyme activity. This chain is Dolichyl-diphosphooligosaccharide--protein glycosyltransferase subunit 4, found in Drosophila virilis (Fruit fly).